We begin with the raw amino-acid sequence, 177 residues long: N5-carboxyaminoimidazole ribonucleotide mutase (177 aa).

3 residues coordinate substrate: Ser18, Asp21, and Arg48.

The protein belongs to the AIR carboxylase family. Class I subfamily.

The catalysed reaction is 5-carboxyamino-1-(5-phospho-D-ribosyl)imidazole + H(+) = 5-amino-1-(5-phospho-D-ribosyl)imidazole-4-carboxylate. It functions in the pathway purine metabolism; IMP biosynthesis via de novo pathway; 5-amino-1-(5-phospho-D-ribosyl)imidazole-4-carboxylate from 5-amino-1-(5-phospho-D-ribosyl)imidazole (N5-CAIR route): step 2/2. Catalyzes the conversion of N5-carboxyaminoimidazole ribonucleotide (N5-CAIR) to 4-carboxy-5-aminoimidazole ribonucleotide (CAIR). This Pyrococcus horikoshii (strain ATCC 700860 / DSM 12428 / JCM 9974 / NBRC 100139 / OT-3) protein is N5-carboxyaminoimidazole ribonucleotide mutase.